We begin with the raw amino-acid sequence, 130 residues long: Small ribosomal subunit protein uS9 (130 aa).

A disordered region spans residues Arg109–Arg130. Positions Lys111–Arg130 are enriched in basic residues.

Belongs to the universal ribosomal protein uS9 family.

This chain is Small ribosomal subunit protein uS9, found in Heliobacterium modesticaldum (strain ATCC 51547 / Ice1).